The following is a 244-amino-acid chain: MKDFNYKLVLSYDGTNYYGFQKQLHLNTIQSVLENVLNKITKQKKIKIYGASRTDKGVHASGQVVHFQLPFLIPNDHFQKILNFCLPSDIQITKIILISKEFHCRFQAKSKIYHYVFSKKKLNVFNYRFQVYIPNMDFNKIKEAILFIEGKHDFSLFTSQKSLKNYQRIIFKAFIKETKQKYFLIIHGNSFIQHMIRFLVGFLIEIAQNKKTLSEFKQMLDLKINQKARLLAPAKGLILKKIFY.

The active-site Nucleophile is the D55. Y113 provides a ligand contact to substrate.

It belongs to the tRNA pseudouridine synthase TruA family. Homodimer.

The catalysed reaction is uridine(38/39/40) in tRNA = pseudouridine(38/39/40) in tRNA. Formation of pseudouridine at positions 38, 39 and 40 in the anticodon stem and loop of transfer RNAs. This chain is tRNA pseudouridine synthase A, found in Phytoplasma mali (strain AT).